Here is a 358-residue protein sequence, read N- to C-terminus: UDP-N-acetylglucosamine--N-acetylmuramyl-(pentapeptide) pyrophosphoryl-undecaprenol N-acetylglucosamine transferase (358 aa).

Residues threonine 11 to glycine 13, asparagine 124, arginine 164, serine 195, and glutamine 291 each bind UDP-N-acetyl-alpha-D-glucosamine.

It belongs to the glycosyltransferase 28 family. MurG subfamily.

It is found in the cell inner membrane. It catalyses the reaction di-trans,octa-cis-undecaprenyl diphospho-N-acetyl-alpha-D-muramoyl-L-alanyl-D-glutamyl-meso-2,6-diaminopimeloyl-D-alanyl-D-alanine + UDP-N-acetyl-alpha-D-glucosamine = di-trans,octa-cis-undecaprenyl diphospho-[N-acetyl-alpha-D-glucosaminyl-(1-&gt;4)]-N-acetyl-alpha-D-muramoyl-L-alanyl-D-glutamyl-meso-2,6-diaminopimeloyl-D-alanyl-D-alanine + UDP + H(+). It functions in the pathway cell wall biogenesis; peptidoglycan biosynthesis. In terms of biological role, cell wall formation. Catalyzes the transfer of a GlcNAc subunit on undecaprenyl-pyrophosphoryl-MurNAc-pentapeptide (lipid intermediate I) to form undecaprenyl-pyrophosphoryl-MurNAc-(pentapeptide)GlcNAc (lipid intermediate II). The chain is UDP-N-acetylglucosamine--N-acetylmuramyl-(pentapeptide) pyrophosphoryl-undecaprenol N-acetylglucosamine transferase from Leptospira interrogans serogroup Icterohaemorrhagiae serovar copenhageni (strain Fiocruz L1-130).